The sequence spans 126 residues: Large ribosomal subunit protein bL19 (126 aa).

This sequence belongs to the bacterial ribosomal protein bL19 family.

Its function is as follows. This protein is located at the 30S-50S ribosomal subunit interface and may play a role in the structure and function of the aminoacyl-tRNA binding site. This chain is Large ribosomal subunit protein bL19, found in Albidiferax ferrireducens (strain ATCC BAA-621 / DSM 15236 / T118) (Rhodoferax ferrireducens).